The chain runs to 372 residues: Heat shock 70 kDa protein II (372 aa).

Belongs to the heat shock protein 70 family.

The protein is Heat shock 70 kDa protein II (HSP70II) of Paracentrotus lividus (Common sea urchin).